The chain runs to 162 residues: Phenazine biosynthesis protein PhzB 2 (162 aa).

Phosphothreonine is present on threonine 91.

This sequence belongs to the PhzA/PhzB family.

Involved in the biosynthesis of the antibiotic phenazine, a nitrogen-containing heterocyclic molecule having important roles in virulence, competition and biological control. In Pseudomonas aeruginosa (strain UCBPP-PA14), this protein is Phenazine biosynthesis protein PhzB 2 (phzB2).